A 167-amino-acid chain; its full sequence is MSQQKMRIHNQYVKDLSLENPNSPFLSLKEVPNIDVMVNVNSVKLEGSEGTEGESEEKSFHEITLHIEAKAMIKDENIKDGVAFICETKYCGIFSVENFAELSTEEVNRALFIGGPTFLFPFAREVIARVTSSGGFPPLMLDPIDFEAMYEQQSRQQKSNASNENFN.

This sequence belongs to the SecB family. In terms of assembly, homotetramer, a dimer of dimers. One homotetramer interacts with 1 SecA dimer.

It localises to the cytoplasm. Its function is as follows. One of the proteins required for the normal export of preproteins out of the cell cytoplasm. It is a molecular chaperone that binds to a subset of precursor proteins, maintaining them in a translocation-competent state. It also specifically binds to its receptor SecA. This is Protein-export protein SecB from Wolbachia sp. subsp. Brugia malayi (strain TRS).